A 2313-amino-acid polypeptide reads, in one-letter code: Histone-lysine N-methyltransferase Set2 (2313 aa).

Disordered regions lie at residues 1–115, 179–442, 550–858, 883–1106, 1118–1150, and 1163–1251; these read MEES…ASTS, AVGG…EETF, EPPL…LKAK, RLDE…KKAL, ETESSESTSSGSKMSRWDVQTSPELEAANPFGD, and KRDK…SQGR. The segment at residues 17-29 is a DNA-binding region (a.T hook 1); the sequence is GRGRGRPPKVALS. Basic and acidic residues predominate over residues 73-82; the sequence is IKFDVRDLLN. A compositionally biased stretch (low complexity) spans 101 to 115; that stretch reads STGHSQSGTTAASTS. The a.T hook 2 DNA-binding region spans 197-209; sequence PRKRGRPRKSQLA. Low complexity predominate over residues 221–241; that stretch reads SCSDSDTNSTSTTTSNMSSDS. Over residues 252-265 the composition is skewed to basic residues; it reads PKSKLRVSLKRLKL. The span at 266–288 shows a compositional bias: low complexity; that stretch reads GGRLESSDSGNSPSSSSPEVEPP. Positions 330-345 are enriched in basic and acidic residues; that stretch reads ESPKGEEEQEEGRPVE. Acidic residues-rich tracts occupy residues 347–356, 365–375, and 388–398; these read EPQDLIDIDM, PDPEEDLDEIM, and ADDEAEEEEDA. Thr404 is subject to Phosphothreonine. Residues 412-433 are compositionally biased toward low complexity; the sequence is ADSCSSAPRRSRRSAPLSGSSR. Residues 552–563 show a composition bias toward basic and acidic residues; that stretch reads PLKDESDPKQTE. The segment covering 659–671 has biased composition (acidic residues); it reads EDYESNQEQVAED. Residues 676–685 show a composition bias toward polar residues; it reads CNNQKGQKQT. 4 stretches are compositionally biased toward basic and acidic residues: residues 689 to 708, 719 to 732, 740 to 749, and 758 to 782; these read EMKEPEKPVAETVSKKEKAM, VDKKVRAGEMEKKV, VPEKKMDSKK, and KQKESGKSAKEAILKKETEKEKSSA. A phosphoserine mark is found at Ser786 and Ser788. Composition is skewed to polar residues over residues 800–833, 918–928, and 938–955; these read AQWSPQLQTLPKSSTKPPQESAPSVISKTTSNQP, KSLSGKTSLRR, and LERNSSPSSDSAQANTSA. Basic residues predominate over residues 959–969; it reads KPSKVKKKINP. The segment covering 997–1010 has biased composition (low complexity); the sequence is SSPVSTSSDSSSKR. Basic and acidic residues predominate over residues 1016–1039; the sequence is TTSDLDGGSKLDQRRYTICEDRQP. Composition is skewed to low complexity over residues 1085 to 1097 and 1118 to 1127; these read SRQNSLDSSSSAS and ETESSESTSS. A compositionally biased stretch (basic and acidic residues) spans 1163–1183; the sequence is KRDKVDEDQRKEGQDEVKREA. The segment covering 1199–1213 has biased composition (low complexity); it reads TPATTPTPSPTQSNP. Positions 1307 to 1360 constitute an AWS domain; sequence NAEMQCDCFLTGDEEAQGHLSCGAGCINRMLMIECGPLCSNGARCTNKRFQQHQ. Residues Cys1312, Cys1314, Cys1328, Cys1332, Cys1341, Cys1345, and Cys1351 each contribute to the Zn(2+) site. Positions 1362-1479 constitute an SET domain; sequence WPCRVFRTEK…PGEEITFDYQ (118 aa). Residues 1415 to 1417 and 1440 to 1441 contribute to the S-adenosyl-L-methionine site; these read HYY and NH. Residue Cys1443 coordinates Zn(2+). A Post-SET domain is found at 1486–1502; that stretch reads DAQRCYCEAANCRGWIG. Gln1488 provides a ligand contact to S-adenosyl-L-methionine. Cys1490 is a binding site for Zn(2+). Residue Tyr1491 participates in S-adenosyl-L-methionine binding. 2 residues coordinate Zn(2+): Cys1492 and Cys1497. Disordered stretches follow at residues 1501–1598 and 1763–1860; these read IGGE…KPKV and MKEH…RRTL. Residues 1505–1534 show a composition bias toward acidic residues; that stretch reads PDSDEGEQLDEESDSDAEMDEEELEAEPEE. Basic residues predominate over residues 1539 to 1551; sequence KSAKAKAKSKLKA. Composition is skewed to basic and acidic residues over residues 1564–1574, 1763–1774, and 1784–1806; these read QTKPKDREYKA, MKEHEREADRQQ, and EDQRERESSNDRFRQDRFRRDTT. Residues 1817–1832 are compositionally biased toward polar residues; the sequence is SGNNTICTITTQQKGS. Basic and acidic residues predominate over residues 1840–1860; that stretch reads TRNDNRRRSDIGPPSEQRRTL. One can recognise a WW domain in the interval 1963–1996; the sequence is DPLPPAWNWQVTSDGDIYYYNLRERISQWEPPSP. A phosphoserine mark is found at Ser2130 and Ser2131. The interval 2177–2218 is disordered; the sequence is LGTVGKRKLPMPPSVTVKKHRQEQRSKKVKSSQSPLTATSAR. Residues 2193–2206 show a composition bias toward basic residues; the sequence is VKKHRQEQRSKKVK. The segment covering 2207-2216 has biased composition (polar residues); it reads SSQSPLTATS.

It belongs to the class V-like SAM-binding methyltransferase superfamily. Histone-lysine methyltransferase family. SET2 subfamily. In terms of assembly, interacts with (phosphorylated) Polr2A.

It localises to the nucleus. It is found in the chromosome. It catalyses the reaction L-lysyl(36)-[histone H3] + 3 S-adenosyl-L-methionine = N(6),N(6),N(6)-trimethyl-L-lysyl(36)-[histone H3] + 3 S-adenosyl-L-homocysteine + 3 H(+). Its function is as follows. Histone methyltransferase that specifically trimethylates 'Lys-36' of histone H3 (H3K36me3). Represents the main enzyme generating H3K36me3, a specific tag for epigenetic transcriptional activation. Involved in dosage compensation in males (X chromosome dosage compensation) by mediating formation of H3K36me3, a mark recognized by msl-3 component of the MSL complex. In addition to its role in dosage compensation in males, promotes germline stem cell differentiation in females: catalyzes formation of H3K36me3, promoting recruitment of msl-3 and subsequent recruitment of the ATAC complex, leading to transcription of genes, such as RpS19b. The protein is Histone-lysine N-methyltransferase Set2 of Drosophila melanogaster (Fruit fly).